The chain runs to 118 residues: Protein TusC (118 aa).

The protein belongs to the DsrF/TusC family. As to quaternary structure, heterohexamer, formed by a dimer of trimers. The hexameric TusBCD complex contains 2 copies each of TusB, TusC and TusD. The TusBCD complex interacts with TusE.

It localises to the cytoplasm. In terms of biological role, part of a sulfur-relay system required for 2-thiolation of 5-methylaminomethyl-2-thiouridine (mnm(5)s(2)U) at tRNA wobble positions. This Salmonella gallinarum (strain 287/91 / NCTC 13346) protein is Protein TusC.